The sequence spans 139 residues: Arsenate reductase (139 aa).

Catalysis depends on nucleophile residues cysteine 10, cysteine 82, and cysteine 89. Disulfide bonds link cysteine 10/cysteine 82 and cysteine 82/cysteine 89.

The protein belongs to the low molecular weight phosphotyrosine protein phosphatase family. Thioredoxin-coupled ArsC subfamily.

The protein localises to the cytoplasm. The enzyme catalyses arsenate + [thioredoxin]-dithiol + H(+) = arsenite + [thioredoxin]-disulfide + H2O. Its function is as follows. Catalyzes the reduction of arsenate [As(V)] to arsenite [As(III)]. The sequence is that of Arsenate reductase from Bacillus licheniformis (strain ATCC 14580 / DSM 13 / JCM 2505 / CCUG 7422 / NBRC 12200 / NCIMB 9375 / NCTC 10341 / NRRL NRS-1264 / Gibson 46).